The sequence spans 142 residues: Large ribosomal subunit protein uL13 (142 aa).

This sequence belongs to the universal ribosomal protein uL13 family. In terms of assembly, part of the 50S ribosomal subunit.

Functionally, this protein is one of the early assembly proteins of the 50S ribosomal subunit, although it is not seen to bind rRNA by itself. It is important during the early stages of 50S assembly. The sequence is that of Large ribosomal subunit protein uL13 from Francisella tularensis subsp. mediasiatica (strain FSC147).